The following is a 476-amino-acid chain: Adenosylhomocysteinase (476 aa).

Substrate is bound by residues threonine 67, aspartate 142, and glutamate 202. 203–205 (TTT) serves as a coordination point for NAD(+). Positions 232 and 236 each coordinate substrate. NAD(+) contacts are provided by residues asparagine 237, 266–271 (GYGDVG), glutamate 289, asparagine 324, 345–347 (IGH), and asparagine 390.

Belongs to the adenosylhomocysteinase family. The cofactor is NAD(+).

It is found in the cytoplasm. It carries out the reaction S-adenosyl-L-homocysteine + H2O = L-homocysteine + adenosine. It functions in the pathway amino-acid biosynthesis; L-homocysteine biosynthesis; L-homocysteine from S-adenosyl-L-homocysteine: step 1/1. Its function is as follows. May play a key role in the regulation of the intracellular concentration of adenosylhomocysteine. The protein is Adenosylhomocysteinase of Parasynechococcus marenigrum (strain WH8102).